A 141-amino-acid polypeptide reads, in one-letter code: Small ribosomal subunit protein uS8c (141 aa).

It belongs to the universal ribosomal protein uS8 family. In terms of assembly, part of the 30S ribosomal subunit.

It localises to the plastid. The protein localises to the chloroplast. Functionally, one of the primary rRNA binding proteins, it binds directly to 16S rRNA central domain where it helps coordinate assembly of the platform of the 30S subunit. The protein is Small ribosomal subunit protein uS8c (rps8) of Chlamydomonas reinhardtii (Chlamydomonas smithii).